The following is a 351-amino-acid chain: Dihydroorotate dehydrogenase (quinone) (351 aa).

Residues 61–65 (AGLDK) and Thr-85 each bind FMN. Substrate is bound at residue Lys-65. A substrate-binding site is contributed by 110–114 (NRMGF). FMN-binding residues include Asn-139 and Asn-172. Asn-172 is a substrate binding site. Ser-175 (nucleophile) is an active-site residue. Asn-177 serves as a coordination point for substrate. Residues Lys-217 and Thr-245 each coordinate FMN. 246 to 247 (NT) contributes to the substrate binding site. FMN-binding positions include Gly-268, Gly-297, and 318 to 319 (YS).

Belongs to the dihydroorotate dehydrogenase family. Type 2 subfamily. In terms of assembly, monomer. It depends on FMN as a cofactor.

Its subcellular location is the cell membrane. It carries out the reaction (S)-dihydroorotate + a quinone = orotate + a quinol. The protein operates within pyrimidine metabolism; UMP biosynthesis via de novo pathway; orotate from (S)-dihydroorotate (quinone route): step 1/1. Its function is as follows. Catalyzes the conversion of dihydroorotate to orotate with quinone as electron acceptor. The chain is Dihydroorotate dehydrogenase (quinone) from Xanthomonas campestris pv. campestris (strain 8004).